We begin with the raw amino-acid sequence, 412 residues long: Putative competence-damage inducible protein (412 aa).

This sequence belongs to the CinA family.

The protein is Putative competence-damage inducible protein of Clostridium perfringens (strain ATCC 13124 / DSM 756 / JCM 1290 / NCIMB 6125 / NCTC 8237 / Type A).